We begin with the raw amino-acid sequence, 197 residues long: NADH-quinone oxidoreductase subunit C (197 aa).

This sequence belongs to the complex I 30 kDa subunit family. As to quaternary structure, NDH-1 is composed of 14 different subunits. Subunits NuoB, C, D, E, F, and G constitute the peripheral sector of the complex.

The protein resides in the cell inner membrane. The catalysed reaction is a quinone + NADH + 5 H(+)(in) = a quinol + NAD(+) + 4 H(+)(out). NDH-1 shuttles electrons from NADH, via FMN and iron-sulfur (Fe-S) centers, to quinones in the respiratory chain. The immediate electron acceptor for the enzyme in this species is believed to be ubiquinone. Couples the redox reaction to proton translocation (for every two electrons transferred, four hydrogen ions are translocated across the cytoplasmic membrane), and thus conserves the redox energy in a proton gradient. The chain is NADH-quinone oxidoreductase subunit C from Neisseria meningitidis serogroup A / serotype 4A (strain DSM 15465 / Z2491).